The chain runs to 334 residues: Large ribosomal subunit protein uL3 (334 aa).

Positions 1–10 (MGMKKNRPRR) are enriched in basic residues. The disordered stretch occupies residues 1–21 (MGMKKNRPRRGSLAFSPRKRA).

Belongs to the universal ribosomal protein uL3 family. In terms of assembly, part of the 50S ribosomal subunit. Forms a cluster with proteins L14 and L24e.

Its function is as follows. One of the primary rRNA binding proteins, it binds directly near the 3'-end of the 23S rRNA, where it nucleates assembly of the 50S subunit. This chain is Large ribosomal subunit protein uL3, found in Methanococcus maripaludis (strain DSM 14266 / JCM 13030 / NBRC 101832 / S2 / LL).